A 239-amino-acid chain; its full sequence is 7-cyano-7-deazaguanine synthase (239 aa).

8 to 18 is an ATP binding site; that stretch reads LSGGLDSPTVL. The Zn(2+) site is built by Cys-188, Cys-196, Cys-199, and Cys-202.

It belongs to the QueC family. Zn(2+) is required as a cofactor.

It carries out the reaction 7-carboxy-7-deazaguanine + NH4(+) + ATP = 7-cyano-7-deazaguanine + ADP + phosphate + H2O + H(+). Its pathway is purine metabolism; 7-cyano-7-deazaguanine biosynthesis. Functionally, catalyzes the ATP-dependent conversion of 7-carboxy-7-deazaguanine (CDG) to 7-cyano-7-deazaguanine (preQ(0)). The sequence is that of 7-cyano-7-deazaguanine synthase from Picrophilus torridus (strain ATCC 700027 / DSM 9790 / JCM 10055 / NBRC 100828 / KAW 2/3).